Here is a 482-residue protein sequence, read N- to C-terminus: 23S rRNA (uracil(1939)-C(5))-methyltransferase RlmD (482 aa).

The segment at 1–33 (MANLFKQSRAKQKNKTTPSQTQTSTKGSARANA) is disordered. Over residues 15 to 28 (KTTPSQTQTSTKGS) the composition is skewed to low complexity. In terms of domain architecture, TRAM spans 51-108 (TAQDANNNAITIQELDWMGQGVARGATMYFVEGALPGETCDIEVVSSKKKVVSAKTIS). Cys-121, Cys-127, Cys-130, and Cys-208 together coordinate [4Fe-4S] cluster. S-adenosyl-L-methionine is bound by residues Gln-313, Phe-342, Asn-347, Glu-363, Asp-390, and Asp-411. Cys-437 functions as the Nucleophile in the catalytic mechanism.

The protein belongs to the class I-like SAM-binding methyltransferase superfamily. RNA M5U methyltransferase family. RlmD subfamily.

It catalyses the reaction uridine(1939) in 23S rRNA + S-adenosyl-L-methionine = 5-methyluridine(1939) in 23S rRNA + S-adenosyl-L-homocysteine + H(+). In terms of biological role, catalyzes the formation of 5-methyl-uridine at position 1939 (m5U1939) in 23S rRNA. In Alteromonas mediterranea (strain DSM 17117 / CIP 110805 / LMG 28347 / Deep ecotype), this protein is 23S rRNA (uracil(1939)-C(5))-methyltransferase RlmD.